A 316-amino-acid chain; its full sequence is NADH-quinone oxidoreductase subunit H (316 aa).

A run of 8 helical transmembrane segments spans residues 6 to 26 (PAVV…LIWV), 74 to 94 (FVIA…VVPF), 98 to 118 (VGVI…SLAV), 145 to 165 (ISYE…AGSF), 177 to 197 (GWYV…AVAE), 233 to 253 (YLGI…GWLG), 256 to 276 (FLPP…FFIL), and 296 to 316 (VMLP…LSVP).

This sequence belongs to the complex I subunit 1 family. In terms of assembly, NDH-1 is composed of 14 different subunits. Subunits NuoA, H, J, K, L, M, N constitute the membrane sector of the complex.

It localises to the cell inner membrane. The catalysed reaction is a quinone + NADH + 5 H(+)(in) = a quinol + NAD(+) + 4 H(+)(out). NDH-1 shuttles electrons from NADH, via FMN and iron-sulfur (Fe-S) centers, to quinones in the respiratory chain. The immediate electron acceptor for the enzyme in this species is believed to be ubiquinone. Couples the redox reaction to proton translocation (for every two electrons transferred, four hydrogen ions are translocated across the cytoplasmic membrane), and thus conserves the redox energy in a proton gradient. This subunit may bind ubiquinone. The chain is NADH-quinone oxidoreductase subunit H from Methylococcus capsulatus (strain ATCC 33009 / NCIMB 11132 / Bath).